The following is a 735-amino-acid chain: MSRRFRLGDIRSTGVAEYASTPVRADASPTTNPPPTAAPASLTSTDSHTMAPPNQLTFDLSGVIFTGSPPAWLLQYRGFEKHMVTMLMLKSGVRTYPRFDDFISALVSTMALMGIVPQTSLTDGEVILMRYANAETLPEPEETTRQWGDSPEAELANEGYGNDEIDNTPQLQAPLISGPPQTYAAAAAPPSLQQSTVPLISATPSPALSRSSSVASLTSIPACSPAPSSLPSILTMQTRPPSPSSKSHQPRVTLPERRPTRRPEHIANDEDYNRSRAGYAQGKPSHSPMYGSGRESHFEEAFFAAYPHSVDGRWHKFSASIVVLADPNEDPALLTLHSLEREEGAQETYIMRTSAAFAVARVRVMRLRPTMSVHDVHDMLAGHPVVSITGRACAYMVRHKLTDGVFSKQFRRIVMGIDPVMIRHGTQALSLFAILTDHRLDHAHTHAAMSLRLAMQFVESPLYDAQRSWLKAHAPATIHCAATSDSNADSTLSAIYRSDSTPRDQPTPGDSTISQLTASNQELQIQITALTTTNNIQARAIAELKACVRPHSTDTHHALSKYALAHTCINTQELPLLTSLLGEDTATAIQTARERAKDIAKRTLTERVAEPLRVMNASLEAELTHERAHSSELRATLAILETDLNTAARERDAHAHMITSLQSEITELRQERLTVITSERTDVALLEQRVTDAERHAVAQHQSLPLLYGSVSLELPPSPTEDELLTSVAPADLWD.

Disordered stretches follow at residues 18 to 50 (YAST…SHTM), 138 to 170 (PEPE…NTPQ), and 218 to 290 (TSIP…SPMY). Positions 38 to 47 (APASLTSTDS) are enriched in low complexity. Residues 218-234 (TSIPACSPAPSSLPSIL) show a composition bias toward low complexity. Over residues 235 to 247 (TMQTRPPSPSSKS) the composition is skewed to polar residues. Positions 254–274 (LPERRPTRRPEHIANDEDYNR) are enriched in basic and acidic residues.

This sequence belongs to the aquareoviridae NS1 protein family.

Non-structural protein with ssRNA-binding activity. Is probably involved in the formation of viral inclusions, where the assembly of cores and the replication of viral RNA are thought to occur. In Ctenopharyngodon idella (Grass carp), this protein is Non-structural protein 1 (S4).